Reading from the N-terminus, the 300-residue chain is Fluorinase (300 aa).

Residues Asp-16, 21 to 23, Tyr-77, Ser-158, Asp-211, Asn-216, 270 to 271, and 278 to 280 contribute to the S-adenosyl-L-methionine site; these read DDS, SR, and RNA.

Belongs to the SAM hydrolase / SAM-dependent halogenase family. Homohexamer.

It catalyses the reaction fluoride + S-adenosyl-L-methionine = 5'-deoxy-5'-fluoroadenosine + L-methionine. The enzyme catalyses chloride + S-adenosyl-L-methionine = 5'-chloro-5'-deoxyadenosine + L-methionine. Its activity is regulated as follows. Activity is severely inhibited by 1 mM Cu(2+) or Zn(2+). In terms of biological role, catalyzes the formation of a C-F bond by combining S-adenosyl-L-methionine (SAM) and fluoride to generate 5'-fluoro-5'-deoxyadenosine (5'-FDA) and L-methionine. Probably involved in fluoroacetate (FAc) and 4-fluorothreonine (4-FT) biosynthesis. In vitro, can also catalyze the conversion of chloride and SAM to 5'-chloro-5'-deoxyadenosine (5'-CIDA) and L-methionine in the presence of L-amino acid oxidase. In Nocardia brasiliensis (strain ATCC 700358 / HUJEG-1), this protein is Fluorinase.